The primary structure comprises 434 residues: Urokinase-type plasminogen activator (434 aa).

A signal peptide spans Met-1–Ser-20. The 37-residue stretch at Gln-36–Glu-72 folds into the EGF-like domain. Intrachain disulfides connect Cys-40/Cys-48, Cys-42/Cys-60, Cys-62/Cys-71, Cys-79/Cys-158, Cys-96/Cys-139, Cys-128/Cys-152, Cys-162/Cys-296, Cys-202/Cys-218, Cys-210/Cys-285, Cys-310/Cys-379, Cys-342/Cys-358, and Cys-369/Cys-397. The 80-residue stretch at Cys-79–Cys-158 folds into the Kringle domain. The tract at residues Glu-159–Lys-172 is connecting peptide. Residues Ile-173–Asn-421 enclose the Peptidase S1 domain. Catalysis depends on His-217, which acts as the Charge relay system. The N-linked (GlcNAc...) asparagine glycan is linked to Asn-228. Catalysis depends on Asp-272, which acts as the Charge relay system. The active-site Charge relay system is Ser-373.

This sequence belongs to the peptidase S1 family.

The protein resides in the secreted. The catalysed reaction is Specific cleavage of Arg-|-Val bond in plasminogen to form plasmin.. Functionally, specifically cleaves the zymogen plasminogen to form the active enzyme plasmin. The chain is Urokinase-type plasminogen activator (PLAU) from Gallus gallus (Chicken).